Reading from the N-terminus, the 132-residue chain is Phosphoribosyl-AMP cyclohydrolase (132 aa).

Asp-79 lines the Mg(2+) pocket. Cys-80 contacts Zn(2+). Residues Asp-81 and Asp-83 each contribute to the Mg(2+) site. Residues Cys-100 and Cys-107 each coordinate Zn(2+).

The protein belongs to the PRA-CH family. In terms of assembly, homodimer. The cofactor is Mg(2+). It depends on Zn(2+) as a cofactor.

It is found in the cytoplasm. The catalysed reaction is 1-(5-phospho-beta-D-ribosyl)-5'-AMP + H2O = 1-(5-phospho-beta-D-ribosyl)-5-[(5-phospho-beta-D-ribosylamino)methylideneamino]imidazole-4-carboxamide. The protein operates within amino-acid biosynthesis; L-histidine biosynthesis; L-histidine from 5-phospho-alpha-D-ribose 1-diphosphate: step 3/9. Its function is as follows. Catalyzes the hydrolysis of the adenine ring of phosphoribosyl-AMP. This Acidovorax ebreus (strain TPSY) (Diaphorobacter sp. (strain TPSY)) protein is Phosphoribosyl-AMP cyclohydrolase.